Reading from the N-terminus, the 411-residue chain is Dual-specificity RNA methyltransferase RlmN (411 aa).

Residue Glu124 is the Proton acceptor of the active site. The region spanning 130-379 is the Radical SAM core domain; that stretch reads EEGRGTLCIS…IRTPRGRDIL (250 aa). Residues Cys137 and Cys382 are joined by a disulfide bond. [4Fe-4S] cluster is bound by residues Cys144, Cys148, and Cys151. Residues 208-209, Ser240, 262-264, and Asn339 each bind S-adenosyl-L-methionine; these read GE and SLH. Catalysis depends on Cys382, which acts as the S-methylcysteine intermediate.

This sequence belongs to the radical SAM superfamily. RlmN family. [4Fe-4S] cluster is required as a cofactor.

The protein resides in the cytoplasm. It carries out the reaction adenosine(2503) in 23S rRNA + 2 reduced [2Fe-2S]-[ferredoxin] + 2 S-adenosyl-L-methionine = 2-methyladenosine(2503) in 23S rRNA + 5'-deoxyadenosine + L-methionine + 2 oxidized [2Fe-2S]-[ferredoxin] + S-adenosyl-L-homocysteine. It catalyses the reaction adenosine(37) in tRNA + 2 reduced [2Fe-2S]-[ferredoxin] + 2 S-adenosyl-L-methionine = 2-methyladenosine(37) in tRNA + 5'-deoxyadenosine + L-methionine + 2 oxidized [2Fe-2S]-[ferredoxin] + S-adenosyl-L-homocysteine. In terms of biological role, specifically methylates position 2 of adenine 2503 in 23S rRNA and position 2 of adenine 37 in tRNAs. m2A2503 modification seems to play a crucial role in the proofreading step occurring at the peptidyl transferase center and thus would serve to optimize ribosomal fidelity. In Rhizobium meliloti (strain 1021) (Ensifer meliloti), this protein is Dual-specificity RNA methyltransferase RlmN.